Consider the following 111-residue polypeptide: Disintegrin Eo1 subunit 1 (111 aa).

A signal peptide spans 1–20; that stretch reads MIQVLLVIICLAVFPYQGSS. The propeptide occupies 21–46; the sequence is IILESGNVNDFELVYPKKVTVLPTGA. The Disintegrin domain maps to 26-111; sequence GNVNDFELVY…SDCPRNPWKD (86 aa). Intrachain disulfides connect Cys53/Cys76, Cys67/Cys73, Cys72/Cys97, and Cys85/Cys104. The Cell attachment site; atypical (WGD) signature appears at 89–91; the sequence is WGD. Positions 110–111 are excised as a propeptide; the sequence is KD.

It belongs to the disintegrin family. Dimeric disintegrin subfamily. Heterodimer; disulfide-linked. Expressed by the venom gland.

The protein resides in the secreted. Its function is as follows. Poor inhibitor of platelet aggregation. The disintegrin inhibits the adhesion of cells expressing the RGD-dependent integrin alpha-5/beta-1 (ITGA5/ITGB1) to immobilized fibronectin. Inhibition on alpha-IIb/beta-3 (ITGA2B/ITGB3) is low. The protein is Disintegrin Eo1 subunit 1 of Echis ocellatus (Ocellated saw-scaled viper).